Here is a 235-residue protein sequence, read N- to C-terminus: Ribonuclease 3 (235 aa).

In terms of domain architecture, RNase III spans 6 to 131; it reads IDQLFKLTGH…LIAVMYLDGG (126 aa). E44 serves as a coordination point for Mg(2+). Residue D48 is part of the active site. D117 and E120 together coordinate Mg(2+). E120 is an active-site residue. The 70-residue stretch at 156–225 folds into the DRBM domain; sequence DAKTELQEWA…AEKILRREGV (70 aa).

This sequence belongs to the ribonuclease III family. In terms of assembly, homodimer. Mg(2+) is required as a cofactor.

It is found in the cytoplasm. It catalyses the reaction Endonucleolytic cleavage to 5'-phosphomonoester.. Its function is as follows. Digests double-stranded RNA. Involved in the processing of primary rRNA transcript to yield the immediate precursors to the large and small rRNAs (23S and 16S). Processes some mRNAs, and tRNAs when they are encoded in the rRNA operon. Processes pre-crRNA and tracrRNA of type II CRISPR loci if present in the organism. The sequence is that of Ribonuclease 3 from Bartonella tribocorum (strain CIP 105476 / IBS 506).